We begin with the raw amino-acid sequence, 394 residues long: Formate-dependent phosphoribosylglycinamide formyltransferase (394 aa).

N(1)-(5-phospho-beta-D-ribosyl)glycinamide contacts are provided by residues 21 to 22 and E81; that span reads EL. ATP is bound by residues R113, K154, 159–164, 194–197, and E202; these read SSGKGQ and EEFI. The region spanning 118-307 is the ATP-grasp domain; the sequence is RLAAEELGLP…QFELHVRAIL (190 aa). The Mg(2+) site is built by E266 and E278. N(1)-(5-phospho-beta-D-ribosyl)glycinamide is bound by residues D285, K355, and 362-363; that span reads RR.

Belongs to the PurK/PurT family. Homodimer.

It carries out the reaction N(1)-(5-phospho-beta-D-ribosyl)glycinamide + formate + ATP = N(2)-formyl-N(1)-(5-phospho-beta-D-ribosyl)glycinamide + ADP + phosphate + H(+). The protein operates within purine metabolism; IMP biosynthesis via de novo pathway; N(2)-formyl-N(1)-(5-phospho-D-ribosyl)glycinamide from N(1)-(5-phospho-D-ribosyl)glycinamide (formate route): step 1/1. Functionally, involved in the de novo purine biosynthesis. Catalyzes the transfer of formate to 5-phospho-ribosyl-glycinamide (GAR), producing 5-phospho-ribosyl-N-formylglycinamide (FGAR). Formate is provided by PurU via hydrolysis of 10-formyl-tetrahydrofolate. This Pelobacter propionicus (strain DSM 2379 / NBRC 103807 / OttBd1) protein is Formate-dependent phosphoribosylglycinamide formyltransferase.